We begin with the raw amino-acid sequence, 440 residues long: Protein EFFECTOR OF TRANSCRIPTION (440 aa).

The GIY-YIG domain maps to 131–167 (SIQGLGVAVNIHDADDISHGQTESIRTRLRSYGRPVP). Residues 172-216 (LGDNASQTITQKKTGGRSKDKKHGFEEERDVSRVEAEENNTNSVH) are disordered. Over residues 175–184 (NASQTITQKK) the composition is skewed to polar residues. The segment covering 194–207 (HGFEEERDVSRVEA) has biased composition (basic and acidic residues). Cx9Cx9RCx2HK repeat units follow at residues 247 to 272 (CGVL…TEHK) and 295 to 320 (CGVI…EDHK). Positions 339-363 (ILKEDKSKPKTRTSSTNQEEPGESL) are disordered. Cx9Cx9RCx2HK repeat units follow at residues 365–390 (CEAT…WQHK) and 409–434 (CGVK…QEHK).

The protein resides in the nucleus. Transcription regulator that negatively modulates gibberellin-mediated developmental processes. May act as transcriptional repressor of giberellin controlled genes. Binds DNA without sequence preference. This is Protein EFFECTOR OF TRANSCRIPTION from Brassica napus (Rape).